The sequence spans 179 residues: Large ribosomal subunit protein uL5 (179 aa).

This sequence belongs to the universal ribosomal protein uL5 family. As to quaternary structure, part of the 50S ribosomal subunit; part of the 5S rRNA/L5/L18/L25 subcomplex. Contacts the 5S rRNA and the P site tRNA. Forms a bridge to the 30S subunit in the 70S ribosome.

Its function is as follows. This is one of the proteins that bind and probably mediate the attachment of the 5S RNA into the large ribosomal subunit, where it forms part of the central protuberance. In the 70S ribosome it contacts protein S13 of the 30S subunit (bridge B1b), connecting the 2 subunits; this bridge is implicated in subunit movement. Contacts the P site tRNA; the 5S rRNA and some of its associated proteins might help stabilize positioning of ribosome-bound tRNAs. This chain is Large ribosomal subunit protein uL5, found in Geobacter sp. (strain M21).